A 208-amino-acid polypeptide reads, in one-letter code: Putative vomeronasal receptor-like protein 4 (208 aa).

Over 1-19 (MEMTKLFSYIVIKNVYYPQ) the chain is Extracellular. The helical transmembrane segment at 20 to 40 (VSFGISANTFLLLFHIFTFAY) threads the bilayer. Residues 41 to 48 (THRLKPID) lie on the Cytoplasmic side of the membrane. Residues 49–69 (MTISHLPLIHILLLFTQAILV) form a helical membrane-spanning segment. Residues 70–97 (SSDLFESWNIQNNDLKCKIITFLNRVMR) are Extracellular-facing. An intrachain disulfide couples Cys86 to Cys173. A helical membrane pass occupies residues 98-118 (GVSICTTCLLSVLQAITISPS). Residues 119–135 (TSFLEKFKHISANHTLG) are Cytoplasmic-facing. The helical transmembrane segment at 136–156 (FILFSWVLNMFITNNLLLFIV) threads the bilayer. Residues 157–183 (PTPNRIGASLLFVTEHCYVLPMSYTHR) are Extracellular-facing. The chain crosses the membrane as a helical span at residues 184–204 (SLFFILMVLRDVIFIGLMVLS). Topologically, residues 205–208 (SGYG) are cytoplasmic.

Belongs to the G-protein coupled receptor 1 family. Expressed in olfactory nerve.

Its subcellular location is the cell membrane. Putative pheromone receptor. The protein is Putative vomeronasal receptor-like protein 4 (VN1R17P) of Homo sapiens (Human).